Here is a 274-residue protein sequence, read N- to C-terminus: Large ribosomal subunit protein uL2 (274 aa).

A disordered region spans residues 224–274 (VAMNPVDHPHGGGEGRTSGGRHPVTPWGIPTKGYKTRRNKRSNKLIVQKRK). Basic residues predominate over residues 257-274 (YKTRRNKRSNKLIVQKRK).

It belongs to the universal ribosomal protein uL2 family. Part of the 50S ribosomal subunit. Forms a bridge to the 30S subunit in the 70S ribosome.

Functionally, one of the primary rRNA binding proteins. Required for association of the 30S and 50S subunits to form the 70S ribosome, for tRNA binding and peptide bond formation. It has been suggested to have peptidyltransferase activity; this is somewhat controversial. Makes several contacts with the 16S rRNA in the 70S ribosome. The chain is Large ribosomal subunit protein uL2 from Francisella tularensis subsp. holarctica (strain FTNF002-00 / FTA).